The sequence spans 228 residues: LexA repressor (228 aa).

Positions 28–48 (IREIGEALDIRSTNGVNDHLK) form a DNA-binding region, H-T-H motif. Residues S146 and K183 each act as for autocatalytic cleavage activity in the active site.

Belongs to the peptidase S24 family. Homodimer.

The enzyme catalyses Hydrolysis of Ala-|-Gly bond in repressor LexA.. Represses a number of genes involved in the response to DNA damage (SOS response), including recA and lexA. In the presence of single-stranded DNA, RecA interacts with LexA causing an autocatalytic cleavage which disrupts the DNA-binding part of LexA, leading to derepression of the SOS regulon and eventually DNA repair. The sequence is that of LexA repressor from Anaeromyxobacter dehalogenans (strain 2CP-1 / ATCC BAA-258).